The primary structure comprises 212 residues: ATP-dependent Clp protease proteolytic subunit (212 aa).

The active-site Nucleophile is serine 113. The active site involves histidine 138.

This sequence belongs to the peptidase S14 family. As to quaternary structure, fourteen ClpP subunits assemble into 2 heptameric rings which stack back to back to give a disk-like structure with a central cavity, resembling the structure of eukaryotic proteasomes.

It localises to the cytoplasm. The enzyme catalyses Hydrolysis of proteins to small peptides in the presence of ATP and magnesium. alpha-casein is the usual test substrate. In the absence of ATP, only oligopeptides shorter than five residues are hydrolyzed (such as succinyl-Leu-Tyr-|-NHMec, and Leu-Tyr-Leu-|-Tyr-Trp, in which cleavage of the -Tyr-|-Leu- and -Tyr-|-Trp bonds also occurs).. Its function is as follows. Cleaves peptides in various proteins in a process that requires ATP hydrolysis. Has a chymotrypsin-like activity. Plays a major role in the degradation of misfolded proteins. In Saccharophagus degradans (strain 2-40 / ATCC 43961 / DSM 17024), this protein is ATP-dependent Clp protease proteolytic subunit.